A 385-amino-acid polypeptide reads, in one-letter code: Alanine racemase (385 aa).

K40 acts as the Proton acceptor; specific for D-alanine in catalysis. Position 40 is an N6-(pyridoxal phosphate)lysine (K40). A substrate-binding site is contributed by R139. The active-site Proton acceptor; specific for L-alanine is Y268. M315 is a substrate binding site.

This sequence belongs to the alanine racemase family. Requires pyridoxal 5'-phosphate as cofactor.

It carries out the reaction L-alanine = D-alanine. The protein operates within amino-acid biosynthesis; D-alanine biosynthesis; D-alanine from L-alanine: step 1/1. In terms of biological role, catalyzes the interconversion of L-alanine and D-alanine. May also act on other amino acids. The protein is Alanine racemase (alr) of Anoxybacillus flavithermus (strain DSM 21510 / WK1).